An 840-amino-acid polypeptide reads, in one-letter code: V-type proton ATPase subunit a, vacuolar isoform (840 aa).

The residue at position 2 (Ala-2) is an N-acetylalanine. Residues 2–404 (AEKEEAIFRS…DCYGIAQYRE (403 aa)) lie on the Cytoplasmic side of the membrane. Residues 117 to 145 (LEERLIQMEDATDQIEVQKNDLEQYRFIL) are a coiled coil. Residues 405–423 (INAGLPTIVTFPFMFAIMF) traverse the membrane as a helical segment. The Vacuolar portion of the chain corresponds to 424–425 (GD). A helical membrane pass occupies residues 426–442 (MGHGFLMTLAALSLVLN). Topologically, residues 443–456 (EKKINKMKRGEIFD) are cytoplasmic. Residues 457 to 486 (MAFTGRYIILLMGVFSMYTGFLYNDIFSKT) form a helical membrane-spanning segment. Topologically, residues 487–534 (MTIFKSGWKWPDHWKKGESITATSVGTYPIGLDWAWHGTENALLFSNS) are vacuolar. The chain crosses the membrane as a helical span at residues 535 to 554 (YKMKLSILMGFIHMTYSYFF). Residues 555–572 (SLANHLYFNSMIDIIGNF) lie on the Cytoplasmic side of the membrane. A helical membrane pass occupies residues 573–593 (IPGLLFMQGIFGYLSVCIVYK). The Vacuolar portion of the chain corresponds to 594–636 (WAVDWVKDGKPAPGLLNMLINMFLSPGTIDDELYPHQAKVQVF). Residues 637–656 (LLLMALVCIPWLLLVKPLHF) traverse the membrane as a helical segment. Residues 657-719 (KFTHKKKSHE…DIMIHQVIHT (63 aa)) are Cytoplasmic-facing. Residues 720-744 (IEFCLNCVSHTASYLRLWALSLAHA) form a helical membrane-spanning segment. Residues 745–765 (QLSSVLWTMTIQIAFGFRGFV) lie on the Vacuolar side of the membrane. Residues 766 to 804 (GVFMTVALFAMWFALTCAVLVLMEGTSAMLHSLRLHWVE) form a helical membrane-spanning segment. At 805 to 840 (SMSKFFVGEGLPYEPFAFEYKDMEVAVASASSSASS) the chain is on the cytoplasmic side.

The protein belongs to the V-ATPase 116 kDa subunit family. In terms of assembly, V-ATPase is a heteromultimeric enzyme composed of a peripheral catalytic V1 complex (components A to H) attached to an integral membrane V0 proton pore complex (components: a, c, c', c'', d, e, f and VOA1). Post-translationally, glycosylated.

It localises to the vacuole membrane. Subunit of the V0 complex of vacuolar(H+)-ATPase (V-ATPase), a multisubunit enzyme composed of a peripheral complex (V1) that hydrolyzes ATP and a membrane integral complex (V0) that translocates protons. V-ATPase is responsible for acidifying and maintaining the pH of intracellular compartments. Is present only in vacuolar V-ATPase complexes; enzymes containing this subunit have a 4-fold higher ratio of proton transport to ATP hydrolysis than complexes containing the Golgi/endosomal isoform and undergo reversible dissociation of V1 and V0 in response to glucose depletion. This chain is V-type proton ATPase subunit a, vacuolar isoform, found in Saccharomyces cerevisiae (strain ATCC 204508 / S288c) (Baker's yeast).